Reading from the N-terminus, the 545-residue chain is Acetyltransferase BOT5 (545 aa).

The N-terminal stretch at 1–19 (MATIPLFFSLILFLRLYHA) is a signal peptide. N-linked (GlcNAc...) asparagine glycans are attached at residues asparagine 70 and asparagine 198. The Proton acceptor role is filled by histidine 208. N-linked (GlcNAc...) asparagine glycans are attached at residues asparagine 346 and asparagine 445. A disordered region spans residues 466–493 (GAGNQKSSSTRKAARHTEPTQAQTQPGR).

It belongs to the plant acyltransferase family.

The protein operates within secondary metabolite biosynthesis. Its function is as follows. Acetyltransferase; part of the gene cluster that mediates the biosynthesis of botrydial. Botrydial is necessary for colonization of plant tissue by the T4 strain. It is a strain-dependent virulence factor since highly aggressive strains like SAS56 or B05 still retain substantial virulence when botrydial synthesis is impaired, since they produce also botcinic acid. The first step of botrydial biosynthesis is performed by the sesquiterpene synthase BOT2 which catalyzes the cyclization of farnesyl diphosphate (FPP) to presilphiperfolan-8-beta-ol (PSP). The cytochrome P450 monooxygenase BOT4 then catalyzes the hydroxylation at C-4 to give a probotryane intermediate. Acetylation of the hydroxyl at C-4 is carried out by the acetyltransferase BOT5, followed by the combined action of the P450 monooxygenases BOT3 and BOT1, to yield finally the glycol, via the regio- and stereospecific hydroxylations at C-10 and C-15 of the probotryane intermediates, respectively. The cleavage of the C10-C15 bond of probotryane skeleton is an intriguing and chemically important reaction, which could be mediated by some of the monooxygenases or by a combination of them. It is possible that either BOT3 or BOT1 would oxidize either the 10- or the 15-hydroxy group to the hydroperoxide derivative, which would then undergo heterolytic fragmentation to give the dialdehyde botrydial. Finally, the dehydrogenase BOT7 might be involved in the conversion of botrydial to dihydrobotrydial. This is Acetyltransferase BOT5 from Botryotinia fuckeliana (Noble rot fungus).